We begin with the raw amino-acid sequence, 49 residues long: Large ribosomal subunit protein bL32 (49 aa).

This sequence belongs to the bacterial ribosomal protein bL32 family.

The polypeptide is Large ribosomal subunit protein bL32 (Helicobacter hepaticus (strain ATCC 51449 / 3B1)).